Here is a 49-residue protein sequence, read N- to C-terminus: Astexin-2 (49 aa).

Residues 1–25 (MTKRTTIAARRVGLIDLGKATRQTK) constitute a propeptide that is removed on maturation. Positions 26–34 (GLTQIQALD) form a cross-link, isoaspartyl glycine isopeptide (Gly-Asp).

Post-translationally, this lasso peptide is hydrolyzed to a linear form by the isopeptidase AtxE2, in vitro. The isopeptidase AtxE2 only recognizes the threaded form (but not the unthreaded form).

It localises to the cytoplasm. The protein localises to the secreted. In terms of biological role, shows weak antimicrobial activity against its phylogenetic relative Caulobacter crescentus. Does not show activity against other bacteria tested (E.coli, Vibrio sp, Burkhoderia thailandensis, and Salmonella newport). In Asticcacaulis excentricus (strain ATCC 15261 / DSM 4724 / KCTC 12464 / NCIMB 9791 / VKM B-1370 / CB 48), this protein is Astexin-2.